A 251-amino-acid polypeptide reads, in one-letter code: Mlc titration factor A (251 aa).

Positions 111, 148, 152, and 211 each coordinate Zn(2+).

It belongs to the MtfA family. In terms of assembly, interacts with Mlc. The cofactor is Zn(2+).

It localises to the cytoplasm. Its function is as follows. Involved in the modulation of the activity of the glucose-phosphotransferase system (glucose-PTS). Interacts with the transcriptional repressor Mlc, preventing its interaction with DNA and leading to the modulation of expression of genes regulated by Mlc, including ptsG, which encodes the PTS system glucose-specific EIICB component. Shows zinc-dependent metallopeptidase activity. In Salmonella arizonae (strain ATCC BAA-731 / CDC346-86 / RSK2980), this protein is Mlc titration factor A.